Here is a 463-residue protein sequence, read N- to C-terminus: Mitochondrial distribution and morphology protein 10 (463 aa).

The protein belongs to the MDM10 family. In terms of assembly, component of the ER-mitochondria encounter structure (ERMES) or MDM complex, composed of MMM1, MDM10, MDM12 and MDM34. Associates with the mitochondrial outer membrane sorting assembly machinery SAM(core) complex.

It is found in the mitochondrion outer membrane. In terms of biological role, component of the ERMES/MDM complex, which serves as a molecular tether to connect the endoplasmic reticulum and mitochondria. Components of this complex are involved in the control of mitochondrial shape and protein biogenesis and may function in phospholipid exchange. MDM10 is involved in the late assembly steps of the general translocase of the mitochondrial outer membrane (TOM complex). Functions in the TOM40-specific route of the assembly of outer membrane beta-barrel proteins, including the association of TOM40 with the receptor TOM22 and small TOM proteins. Can associate with the SAM(core) complex as well as the MDM12-MMM1 complex, both involved in late steps of the major beta-barrel assembly pathway, that is responsible for biogenesis of all outer membrane beta-barrel proteins. May act as a switch that shuttles between both complexes and channels precursor proteins into the TOM40-specific pathway. Plays a role in mitochondrial morphology and in the inheritance of mitochondria. This Candida dubliniensis (strain CD36 / ATCC MYA-646 / CBS 7987 / NCPF 3949 / NRRL Y-17841) (Yeast) protein is Mitochondrial distribution and morphology protein 10.